The primary structure comprises 179 residues: Warthog protein 3 (179 aa).

The first 19 residues, 1–19, serve as a signal peptide directing secretion; it reads MLYHVEMFTIILLFGFSLA. N-linked (GlcNAc...) asparagine glycans are attached at residues Asn52 and Asn147.

As to expression, expressed in the trinucleate pharyngeal gland cell g1, seam cells and hypodermis.

It localises to the secreted. Intercellular signal essential for a variety of patterning events during development. This is Warthog protein 3 (wrt-3) from Caenorhabditis elegans.